A 356-amino-acid polypeptide reads, in one-letter code: MKRDLLLTKIEEYKNIMPWYVLDYYQSKLSVPYSFTTLYEYLKEYKRFFEWLIDSDLSKAARIADVDLTTLEHLSKKDMEAFILYLRERPSLNTYSTKKGVSQTTINRTLSALSSLYKYLTEEVENEHGEPYFYRNVMKKVATKKKRETLAARAENIKQKLFLGDETMAFLDYVDKEYEHKLSNRAKASFRKNKERDLAIIALLLASGIRLSEAVNLDLKDVNLNMMLVEVTRKGGKRDSVNVAAFAKPHLEAYLSVRKDRYQAEKQDVAFFLTAYRGLPNRIDASSIEKMVGKYSESFKIRVTPHKLRHTLATRLYDTTKSQVLVSHQLGHASTQVTDLYTHIVNDEQKNALDKL.

In terms of domain architecture, Core-binding (CB) spans 16 to 121 (IMPWYVLDYY…ALSSLYKYLT (106 aa)). The Tyr recombinase domain maps to 169-354 (AFLDYVDKEY…VNDEQKNALD (186 aa)). Residues Arg-210, Lys-234, His-306, Arg-309, and His-332 contribute to the active site. The O-(3'-phospho-DNA)-tyrosine intermediate role is filled by Tyr-341.

The protein belongs to the 'phage' integrase family. XerS subfamily.

It localises to the cytoplasm. FtsK is required for recombination. Functionally, site-specific tyrosine recombinase, which acts by catalyzing the cutting and rejoining of the recombining DNA molecules. Essential to convert dimers of the bacterial chromosome into monomers to permit their segregation at cell division. The polypeptide is Tyrosine recombinase XerS (Streptococcus equi subsp. zooepidemicus (strain H70)).